A 429-amino-acid polypeptide reads, in one-letter code: Small ribosomal subunit protein mS47 (429 aa).

4 residues coordinate substrate: E141, G166, E189, and D197.

It belongs to the enoyl-CoA hydratase/isomerase family. Mitochondrion-specific ribosomal protein mS47 subfamily. Component of the mitochondrial small ribosomal subunit (mt-SSU). Mature yeast 74S mitochondrial ribosomes consist of a small (37S) and a large (54S) subunit. The 37S small subunit contains a 15S ribosomal RNA (15S mt-rRNA) and at least 32 different proteins. The 54S large subunit contains a 21S rRNA (21S mt-rRNA) and at least 45 different proteins. mS47/snr1 forms a protuberance of the yeast mitoribosome and retains a solvent-exposed cavity likely capable of accommodating a substrate, in accordance with it being an active enzyme as well as an integral constituent of the mitoribosome.

It localises to the mitochondrion. It catalyses the reaction 3-hydroxy-2-methylpropanoyl-CoA + H2O = 3-hydroxy-2-methylpropanoate + CoA + H(+). It functions in the pathway amino-acid degradation; L-valine degradation. Its function is as follows. Component of the mitochondrial ribosome (mitoribosome), a dedicated translation machinery responsible for the synthesis of mitochondrial genome-encoded proteins, including at least some of the essential transmembrane subunits of the mitochondrial respiratory chain. The mitoribosomes are attached to the mitochondrial inner membrane and translation products are cotranslationally integrated into the membrane. mS47/snr1 has enzymatic activity in vitro, and is able to catalyze the specific hydrolysis of 3-hydroxyisobutyryl-CoA (HIBYL-CoA). However, because the turnover rate of mS47/snr1 is only a fraction of that of the homologous mammalian enzyme, the physiological function of this activity remains unclear. Has an indirect role in endocytic membrane trafficking. In Schizosaccharomyces pombe (strain 972 / ATCC 24843) (Fission yeast), this protein is Small ribosomal subunit protein mS47 (snr1).